The following is a 298-amino-acid chain: Inosose dehydratase 1 (298 aa).

It belongs to the IolE/MocC family. It depends on glutathione as a cofactor. Requires Co(2+) as cofactor. Mn(2+) serves as cofactor.

The catalysed reaction is scyllo-inosose = 3D-3,5/4-trihydroxycyclohexane-1,2-dione + H2O. The protein operates within polyol metabolism; myo-inositol degradation into acetyl-CoA; acetyl-CoA from myo-inositol: step 2/7. Its function is as follows. Catalyzes the dehydration of inosose (2-keto-myo-inositol, 2KMI or 2,4,6/3,5-pentahydroxycyclohexanone) to 3D-(3,5/4)-trihydroxycyclohexane-1,2-dione (D-2,3-diketo-4-deoxy-epi-inositol). The polypeptide is Inosose dehydratase 1 (Bacillus cereus (strain ZK / E33L)).